The primary structure comprises 239 residues: Adenylate kinase 2 (239 aa).

29–34 serves as a coordination point for ATP; sequence GSGKGT. Residues 49–78 form an NMP region; the sequence is STGDILRAIIASGSELGQKVQKITESGGLV. Residues Thr50, Arg55, 76-78, 104-107, and Gln111 contribute to the AMP site; these read GLV and GFPR. The tract at residues 145-182 is LID; the sequence is GRLFHLASGRSYHELFNPPKVPMVDDITGDRLVHRSDD. ATP-binding positions include Arg146 and 155 to 156; that span reads SY. 2 residues coordinate AMP: Arg179 and Arg190.

It belongs to the adenylate kinase family. AK2 subfamily. Monomer. It depends on Mg(2+) as a cofactor.

It localises to the cytoplasm. The protein localises to the cytosol. The enzyme catalyses AMP + ATP = 2 ADP. It participates in purine metabolism; purine nucleotide biosynthesis. Its function is as follows. Catalyzes the reversible transfer of the terminal phosphate group between ATP and AMP. Plays an important role in cellular energy homeostasis and in adenine nucleotide metabolism. The protein is Adenylate kinase 2 of Schistosoma mansoni (Blood fluke).